Consider the following 942-residue polypeptide: Alanine--tRNA ligase (942 aa).

H586, H590, C695, and H699 together coordinate Zn(2+).

The protein belongs to the class-II aminoacyl-tRNA synthetase family. The cofactor is Zn(2+).

It is found in the cytoplasm. It catalyses the reaction tRNA(Ala) + L-alanine + ATP = L-alanyl-tRNA(Ala) + AMP + diphosphate. Catalyzes the attachment of alanine to tRNA(Ala) in a two-step reaction: alanine is first activated by ATP to form Ala-AMP and then transferred to the acceptor end of tRNA(Ala). Also edits incorrectly charged Ser-tRNA(Ala) and Gly-tRNA(Ala) via its editing domain. This Akkermansia muciniphila (strain ATCC BAA-835 / DSM 22959 / JCM 33894 / BCRC 81048 / CCUG 64013 / CIP 107961 / Muc) protein is Alanine--tRNA ligase.